Reading from the N-terminus, the 266-residue chain is Ribosomal RNA small subunit methyltransferase A (266 aa).

Asparagine 10, isoleucine 12, glycine 37, glutamate 58, aspartate 82, and asparagine 105 together coordinate S-adenosyl-L-methionine.

Belongs to the class I-like SAM-binding methyltransferase superfamily. rRNA adenine N(6)-methyltransferase family. RsmA subfamily.

It is found in the cytoplasm. It carries out the reaction adenosine(1518)/adenosine(1519) in 16S rRNA + 4 S-adenosyl-L-methionine = N(6)-dimethyladenosine(1518)/N(6)-dimethyladenosine(1519) in 16S rRNA + 4 S-adenosyl-L-homocysteine + 4 H(+). Functionally, specifically dimethylates two adjacent adenosines (A1518 and A1519) in the loop of a conserved hairpin near the 3'-end of 16S rRNA in the 30S particle. May play a critical role in biogenesis of 30S subunits. This is Ribosomal RNA small subunit methyltransferase A from Mycoplasma mycoides subsp. mycoides SC (strain CCUG 32753 / NCTC 10114 / PG1).